The chain runs to 431 residues: Protein SHQ1 homolog (431 aa).

It belongs to the SHQ1 family.

Required for the quantitative accumulation of H/ACA ribonucleoproteins (RNPs). This chain is Protein SHQ1 homolog, found in Caenorhabditis elegans.